Consider the following 306-residue polypeptide: MTTSQVLHPRWADTLMYVYEKSPNENNQNKSQIMEGLSGNCPATHCRELISHPALGRHSGTIATHQGSVYSDISSPETGRQCPAPQTSSSASLSYGYPFGNPYYGCRLSHSHNVNLQQKPCSYHPAEKYAETSSALPTEELSSRAKEFAFYPSLASSYQAVPGYLDMSVVPSISVHPEPRHDALIPMEGYQHWALSNGWDGQVYCSKEQTQSSHLWKSPFPDVVPLQPEVSSYRRGRKKRVPYTKIQLKELEKEYAASKFITKDKRRRISATTNLSERQVTIWFQNRRVKEKKFVSKSKTNNHMHT.

The homeobox DNA-binding region spans 236–295 (GRKKRVPYTKIQLKELEKEYAASKFITKDKRRRISATTNLSERQVTIWFQNRRVKEKKFV).

The protein belongs to the Abd-B homeobox family.

The protein localises to the nucleus. In terms of biological role, sequence-specific transcription factor which is part of a developmental regulatory system that provides cells with specific positional identities on the anterior-posterior axis. The protein is Homeobox protein Hox-C13a (hoxc13a) of Danio rerio (Zebrafish).